The following is a 344-amino-acid chain: Uroporphyrinogen decarboxylase (344 aa).

Residues 26–30 (RQAGR), Asp76, Tyr151, Ser206, and His321 each bind substrate.

It belongs to the uroporphyrinogen decarboxylase family. As to quaternary structure, homodimer.

It localises to the cytoplasm. The catalysed reaction is uroporphyrinogen III + 4 H(+) = coproporphyrinogen III + 4 CO2. It participates in porphyrin-containing compound metabolism; protoporphyrin-IX biosynthesis; coproporphyrinogen-III from 5-aminolevulinate: step 4/4. Its function is as follows. Catalyzes the decarboxylation of four acetate groups of uroporphyrinogen-III to yield coproporphyrinogen-III. The sequence is that of Uroporphyrinogen decarboxylase from Sinorhizobium fredii (strain NBRC 101917 / NGR234).